Reading from the N-terminus, the 470-residue chain is Properdin (470 aa).

Residues 1 to 26 (MTAPVQVPQSLLLLLMLLLTLPATGS) form the signal peptide. TSP type-1 domains follow at residues 27–75 (DPVL…QACR), 76–133 (SPRW…QCCP), 135–190 (MGGW…QVCP), 192–254 (HGAW…PPCP), 256–312 (AGGW…VPCP), 314–376 (DGEW…QNCI), and 380–463 (KGSW…PACK). Intrachain disulfides connect cysteine 31/cysteine 55, cysteine 42/cysteine 71, and cysteine 56/cysteine 74. 2 C-linked (Man) tryptophan glycosylation sites follow: tryptophan 82 and tryptophan 85. Disulfide bonds link cysteine 88–cysteine 126, cysteine 92–cysteine 132, cysteine 103–cysteine 110, cysteine 131–cysteine 169, cysteine 147–cysteine 183, cysteine 151–cysteine 189, and cysteine 162–cysteine 173. 3 C-linked (Man) tryptophan glycosylation sites follow: tryptophan 138, tryptophan 141, and tryptophan 144. Threonine 150 carries an O-linked (Fuc...) threonine glycan. Tryptophan 195, tryptophan 198, and tryptophan 201 each carry a C-linked (Man) tryptophan glycan. 3 cysteine pairs are disulfide-bonded: cysteine 204/cysteine 247, cysteine 208/cysteine 253, and cysteine 223/cysteine 237. Serine 207 carries O-linked (Fuc...) serine glycosylation. C-linked (Man) tryptophan glycans are attached at residues tryptophan 259 and tryptophan 262. Disulfide bonds link cysteine 268–cysteine 305, cysteine 272–cysteine 311, and cysteine 283–cysteine 295. A glycan (O-linked (Fuc...) threonine) is linked at threonine 271. C-linked (Man) tryptophan glycosylation is found at tryptophan 320 and tryptophan 323. Intrachain disulfides connect cysteine 326/cysteine 369, cysteine 336/cysteine 375, and cysteine 349/cysteine 359. The interaction with Complement C3 beta chain stretch occupies residues 350-358 (KGRKFNGQR). C-linked (Man) tryptophan glycosylation is found at tryptophan 383, tryptophan 386, and tryptophan 389. 3 disulfides stabilise this stretch: cysteine 392/cysteine 456, cysteine 396/cysteine 462, and cysteine 408/cysteine 440. An N-linked (GlcNAc...) asparagine glycan is attached at asparagine 429.

As to quaternary structure, in plasma, properdin exists as dimers, trimers or tetramers in the relative proportions of 26:54:20. Interacts with the pro-C3-convertase enzyme complex (C3b-Bb) comprised of Complement C3 beta chain (C3b) and the Complement factor B Bb fragment (Bb), where it binds (via its TSP type-1 5 domain) with C3b and Bb. This interaction stabilizes the complex and allows it to become the active C3-convertase enzyme complex (C3b-Bb-FP). Interacts with C3b. Interacts with CFB.

Its subcellular location is the secreted. Functionally, a positive regulator of the alternate pathway of complement. It binds to and stabilizes the C3- and C5-convertase enzyme complexes. Inhibits CFI-CFH mediated degradation of Inhibits CFI-CFH mediated degradation of Complement C3 beta chain (C3b). The polypeptide is Properdin (CFP) (Cavia porcellus (Guinea pig)).